Here is a 145-residue protein sequence, read N- to C-terminus: MKLKVTKLEKAAILPKYVHSDDSGLDLSAIEDLEIPPGESQLVPTGIAIELPPNTEAQIRPRSGLALKHQITVLNTPGTVDEGYRGEIGVILINHGKNSFKVTRGMKIAQMVIAPVIRVEVEEVDHLSDTTRGSGGFGSTGLTSD.

Substrate-binding positions include 62-64 (RSG), asparagine 75, and 79-81 (TVD).

This sequence belongs to the dUTPase family. Mg(2+) serves as cofactor.

It catalyses the reaction dUTP + H2O = dUMP + diphosphate + H(+). It functions in the pathway pyrimidine metabolism; dUMP biosynthesis; dUMP from dCTP (dUTP route): step 2/2. In terms of biological role, this enzyme is involved in nucleotide metabolism: it produces dUMP, the immediate precursor of thymidine nucleotides and it decreases the intracellular concentration of dUTP so that uracil cannot be incorporated into DNA. In Gloeothece citriformis (strain PCC 7424) (Cyanothece sp. (strain PCC 7424)), this protein is Deoxyuridine 5'-triphosphate nucleotidohydrolase.